Reading from the N-terminus, the 882-residue chain is Translation initiation factor IF-2 (882 aa).

A disordered region spans residues 38–294; the sequence is IEDSQASWVK…KSKHKRKKEN (257 aa). 3 stretches are compositionally biased toward basic and acidic residues: residues 66-76, 109-128, and 207-219; these read TRDEAVKKHSG, GRRE…ERHS, and PDNK…DAKR. Residues 282 to 292 show a composition bias toward basic residues; sequence PGRKSKHKRKK. The tr-type G domain occupies 383–556; that stretch reads ARPPVVTIMG…EMNEIRANPD (174 aa). The segment at 392–399 is G1; sequence GHVDHGKT. 392 to 399 is a GTP binding site; sequence GHVDHGKT. The segment at 417 to 421 is G2; that stretch reads GITQH. Residues 438–441 form a G3 region; it reads DTPG. GTP-binding positions include 438-442 and 492-495; these read DTPGH and NKID. Positions 492 to 495 are G4; the sequence is NKID. Residues 528–530 are G5; the sequence is SAK.

This sequence belongs to the TRAFAC class translation factor GTPase superfamily. Classic translation factor GTPase family. IF-2 subfamily.

It is found in the cytoplasm. In terms of biological role, one of the essential components for the initiation of protein synthesis. Protects formylmethionyl-tRNA from spontaneous hydrolysis and promotes its binding to the 30S ribosomal subunits. Also involved in the hydrolysis of GTP during the formation of the 70S ribosomal complex. This is Translation initiation factor IF-2 from Syntrophomonas wolfei subsp. wolfei (strain DSM 2245B / Goettingen).